A 270-amino-acid chain; its full sequence is Shikimate dehydrogenase (NADP(+)) (270 aa).

Shikimate-binding positions include 14-16 (SLS) and Thr61. Lys65 (proton acceptor) is an active-site residue. Asp77 lines the NADP(+) pocket. Shikimate-binding residues include Asn86 and Asp101. NADP(+) contacts are provided by residues 125–129 (GNGGA) and Ile210. A shikimate-binding site is contributed by Tyr212. Position 233 (Gly233) interacts with NADP(+).

This sequence belongs to the shikimate dehydrogenase family. In terms of assembly, homodimer.

The enzyme catalyses shikimate + NADP(+) = 3-dehydroshikimate + NADPH + H(+). It participates in metabolic intermediate biosynthesis; chorismate biosynthesis; chorismate from D-erythrose 4-phosphate and phosphoenolpyruvate: step 4/7. Functionally, involved in the biosynthesis of the chorismate, which leads to the biosynthesis of aromatic amino acids. Catalyzes the reversible NADPH linked reduction of 3-dehydroshikimate (DHSA) to yield shikimate (SA). The protein is Shikimate dehydrogenase (NADP(+)) of Clostridium beijerinckii (strain ATCC 51743 / NCIMB 8052) (Clostridium acetobutylicum).